We begin with the raw amino-acid sequence, 507 residues long: Light-independent protochlorophyllide reductase subunit B (507 aa).

Residue Asp36 coordinates [4Fe-4S] cluster. Asp293 acts as the Proton donor in catalysis. A substrate-binding site is contributed by Gly428–Met429.

This sequence belongs to the ChlB/BchB/BchZ family. Protochlorophyllide reductase is composed of three subunits; ChlL, ChlN and ChlB. Forms a heterotetramer of two ChlB and two ChlN subunits. [4Fe-4S] cluster serves as cofactor.

Its subcellular location is the plastid. The protein resides in the chloroplast. It catalyses the reaction chlorophyllide a + oxidized 2[4Fe-4S]-[ferredoxin] + 2 ADP + 2 phosphate = protochlorophyllide a + reduced 2[4Fe-4S]-[ferredoxin] + 2 ATP + 2 H2O. Its pathway is porphyrin-containing compound metabolism; chlorophyll biosynthesis (light-independent). Component of the dark-operative protochlorophyllide reductase (DPOR) that uses Mg-ATP and reduced ferredoxin to reduce ring D of protochlorophyllide (Pchlide) to form chlorophyllide a (Chlide). This reaction is light-independent. The NB-protein (ChlN-ChlB) is the catalytic component of the complex. In Porphyra purpurea (Red seaweed), this protein is Light-independent protochlorophyllide reductase subunit B.